We begin with the raw amino-acid sequence, 279 residues long: Large ribosomal subunit protein uL2 (279 aa).

The disordered stretch occupies residues 223-279; that stretch reads VAMNPVDHPMGGGEGRSSGGHPRSRKGLYAKGGKTRSANKYSKNMIVKKRVNKRLSK. The span at 268 to 279 shows a compositional bias: basic residues; sequence IVKKRVNKRLSK.

It belongs to the universal ribosomal protein uL2 family. In terms of assembly, part of the 50S ribosomal subunit. Forms a bridge to the 30S subunit in the 70S ribosome.

Its function is as follows. One of the primary rRNA binding proteins. Required for association of the 30S and 50S subunits to form the 70S ribosome, for tRNA binding and peptide bond formation. It has been suggested to have peptidyltransferase activity; this is somewhat controversial. Makes several contacts with the 16S rRNA in the 70S ribosome. This is Large ribosomal subunit protein uL2 from Cytophaga hutchinsonii (strain ATCC 33406 / DSM 1761 / CIP 103989 / NBRC 15051 / NCIMB 9469 / D465).